The following is a 182-amino-acid chain: MQGSLISSEIAEPYAQALLSVAQSSGQLEAIGGEIKSLLELLENAPDLRAFIGNPVIKEEAKKAVLSQVMGSSANPYLTNFMMLLVDKRRIQFLEPVCQQYLTLARVLTNTVLAEVSSATELNDSQKQIVIDKVKTLTGANVVELKTKVDGSLIGGVVIKVGSQVFDASIRGQLQRLSLSLR.

Belongs to the ATPase delta chain family. In terms of assembly, F-type ATPases have 2 components, F(1) - the catalytic core - and F(0) - the membrane proton channel. F(1) has five subunits: alpha(3), beta(3), gamma(1), delta(1), epsilon(1). CF(0) has four main subunits: a(1), b(1), b'(1) and c(10-14). The alpha and beta chains form an alternating ring which encloses part of the gamma chain. F(1) is attached to F(0) by a central stalk formed by the gamma and epsilon chains, while a peripheral stalk is formed by the delta, b and b' chains.

It localises to the cellular thylakoid membrane. In terms of biological role, f(1)F(0) ATP synthase produces ATP from ADP in the presence of a proton or sodium gradient. F-type ATPases consist of two structural domains, F(1) containing the extramembraneous catalytic core and F(0) containing the membrane proton channel, linked together by a central stalk and a peripheral stalk. During catalysis, ATP synthesis in the catalytic domain of F(1) is coupled via a rotary mechanism of the central stalk subunits to proton translocation. Functionally, this protein is part of the stalk that links CF(0) to CF(1). It either transmits conformational changes from CF(0) to CF(1) or is implicated in proton conduction. The chain is ATP synthase subunit delta from Microcystis aeruginosa (strain NIES-843 / IAM M-2473).